The primary structure comprises 411 residues: Arginine deiminase (411 aa).

Catalysis depends on Cys401, which acts as the Amidino-cysteine intermediate.

The protein belongs to the arginine deiminase family.

The protein localises to the cytoplasm. It catalyses the reaction L-arginine + H2O = L-citrulline + NH4(+). Its pathway is amino-acid degradation; L-arginine degradation via ADI pathway; carbamoyl phosphate from L-arginine: step 1/2. This is Arginine deiminase from Staphylococcus aureus (strain bovine RF122 / ET3-1).